Consider the following 123-residue polypeptide: Large ribosomal subunit protein uL18 (123 aa).

This sequence belongs to the universal ribosomal protein uL18 family. As to quaternary structure, part of the 50S ribosomal subunit; part of the 5S rRNA/L5/L18/L25 subcomplex. Contacts the 5S and 23S rRNAs.

Its function is as follows. This is one of the proteins that bind and probably mediate the attachment of the 5S RNA into the large ribosomal subunit, where it forms part of the central protuberance. This chain is Large ribosomal subunit protein uL18, found in Chlamydia trachomatis serovar A (strain ATCC VR-571B / DSM 19440 / HAR-13).